The following is an 85-amino-acid chain: Neurotoxin BmKAEP2 (85 aa).

The signal sequence occupies residues 1–21 (MKLFLLLVISASMLIDGLVNA). Residues 22 to 82 (DGYIRGSNGC…TWKSESNTCG (61 aa)) enclose the LCN-type CS-alpha/beta domain. 4 disulfides stabilise this stretch: Cys31–Cys81, Cys35–Cys56, Cys42–Cys63, and Cys46–Cys65.

It belongs to the long (4 C-C) scorpion toxin superfamily. Sodium channel inhibitor family. Beta subfamily. In terms of tissue distribution, expressed by the venom gland.

The protein resides in the secreted. Functionally, depressant insect beta-toxins cause a transient contraction paralysis followed by a slow flaccid paralysis. They bind voltage-independently at site-4 of sodium channels (Nav) and shift the voltage of activation toward more negative potentials thereby affecting sodium channel activation and promoting spontaneous and repetitive firing. This toxin is active only on insects. Has potential anti-epilepsy effect. This is Neurotoxin BmKAEP2 from Olivierus martensii (Manchurian scorpion).